The following is a 78-amino-acid chain: DNA-directed RNA polymerase subunit Rpo5 (78 aa).

Belongs to the archaeal Rpo5/eukaryotic RPB5 RNA polymerase subunit family. Part of the RNA polymerase complex.

The protein resides in the cytoplasm. The catalysed reaction is RNA(n) + a ribonucleoside 5'-triphosphate = RNA(n+1) + diphosphate. Functionally, DNA-dependent RNA polymerase (RNAP) catalyzes the transcription of DNA into RNA using the four ribonucleoside triphosphates as substrates. This Methanosarcina mazei (strain ATCC BAA-159 / DSM 3647 / Goe1 / Go1 / JCM 11833 / OCM 88) (Methanosarcina frisia) protein is DNA-directed RNA polymerase subunit Rpo5.